Reading from the N-terminus, the 339-residue chain is Deubiquitinase and deneddylase Dub2 (339 aa).

A helical membrane pass occupies residues 36–56; the sequence is IIIALFLIVISCGLILCAYTF. Active-site residues include histidine 203, aspartate 220, and cysteine 282.

The protein belongs to the peptidase C48 family.

The protein resides in the secreted. Its subcellular location is the host cell. It is found in the membrane. In terms of biological role, effector proteins function to alter host cell physiology and promote bacterial survival in host tissues. This protease possesses deubiquitinating and deneddylating activities. This Chlamydia trachomatis serovar B (strain Jali20/OT) protein is Deubiquitinase and deneddylase Dub2 (cdu2).